A 240-amino-acid polypeptide reads, in one-letter code: 2,3,4,5-tetrahydropyridine-2,6-dicarboxylate N-acetyltransferase (240 aa).

The protein belongs to the transferase hexapeptide repeat family. DapH subfamily.

The enzyme catalyses (S)-2,3,4,5-tetrahydrodipicolinate + acetyl-CoA + H2O = L-2-acetamido-6-oxoheptanedioate + CoA. The protein operates within amino-acid biosynthesis; L-lysine biosynthesis via DAP pathway; LL-2,6-diaminopimelate from (S)-tetrahydrodipicolinate (acetylase route): step 1/3. Its function is as follows. Catalyzes the transfer of an acetyl group from acetyl-CoA to tetrahydrodipicolinate. The polypeptide is 2,3,4,5-tetrahydropyridine-2,6-dicarboxylate N-acetyltransferase (Bacillus thuringiensis (strain Al Hakam)).